A 134-amino-acid polypeptide reads, in one-letter code: Small ribosomal subunit protein bS6 (134 aa).

A disordered region spans residues 103–134 (AAPVKSAEEGTEEVAAEAATEAPAETTTTVEV). Residues 118–134 (AEAATEAPAETTTTVEV) show a composition bias toward low complexity.

The protein belongs to the bacterial ribosomal protein bS6 family.

Binds together with bS18 to 16S ribosomal RNA. The sequence is that of Small ribosomal subunit protein bS6 from Geobacter sp. (strain M21).